The following is a 149-amino-acid chain: Down syndrome critical region protein 9 (149 aa).

Positions 1–41 (MGRICPVNSRARRLRARPGRPSGDSLPYHQLQGGAPRLWSP) are disordered.

The sequence is that of Down syndrome critical region protein 9 (DSCR9) from Pan troglodytes (Chimpanzee).